The following is a 221-amino-acid chain: Proteasome subunit beta type-1 (221 aa).

Belongs to the peptidase T1B family. The 26S proteasome consists of a 20S proteasome core and two 19S regulatory subunits. The 20S proteasome core is composed of 28 subunits that are arranged in four stacked rings, resulting in a barrel-shaped structure. The two end rings are each formed by seven alpha subunits, and the two central rings are each formed by seven beta subunits. The catalytic chamber with the active sites is on the inside of the barrel.

The protein localises to the cytoplasm. It localises to the nucleus. In terms of biological role, non-catalytic component of the proteasome, a multicatalytic proteinase complex which is characterized by its ability to cleave peptides with Arg, Phe, Tyr, Leu, and Glu adjacent to the leaving group at neutral or slightly basic pH. The proteasome has an ATP-dependent proteolytic activity. This chain is Proteasome subunit beta type-1 (PBF1), found in Oryza sativa subsp. japonica (Rice).